Reading from the N-terminus, the 142-residue chain is Transcription antitermination protein NusB (142 aa).

Belongs to the NusB family.

Its function is as follows. Involved in transcription antitermination. Required for transcription of ribosomal RNA (rRNA) genes. Binds specifically to the boxA antiterminator sequence of the ribosomal RNA (rrn) operons. The sequence is that of Transcription antitermination protein NusB from Streptomyces coelicolor (strain ATCC BAA-471 / A3(2) / M145).